Here is a 1140-residue protein sequence, read N- to C-terminus: Protein shank (1140 aa).

ANK repeat units lie at residues 144–174 (QGET…HVDF), 178–207 (EGQT…SPNY), 211–242 (IGLT…DIGV), 246–275 (HGNH…QIDA), 279–309 (NGNS…HLAV), and 312–341 (QGQT…KSSV). The segment at 337 to 412 (PKSSVPYRGT…ITPSEYGTMR (76 aa)) is disordered. The span at 351–364 (TRRRLSSTITRRRS) shows a compositional bias: basic residues. Low complexity predominate over residues 388 to 412 (SAAPSPSPSRSSRTTITPSEYGTMR). The region spanning 436–529 (ILVIPRGVKG…TITLKVITVD (94 aa)) is the PDZ domain. Composition is skewed to polar residues over residues 640–657 (DQES…NSVS) and 687–704 (TSTF…QLSR). Disordered stretches follow at residues 640–673 (DQES…ASSA), 687–856 (TSTF…AASA), 875–902 (QLKK…STTD), 961–993 (KDSG…HSPN), and 1008–1028 (YGQK…SSTV). 2 stretches are compositionally biased toward low complexity: residues 761–775 (QHQN…QQHP) and 784–793 (PQPIQQQQSS). Composition is skewed to pro residues over residues 794–806 (IPPP…PPHC) and 823–847 (VPPP…PPPG). A compositionally biased stretch (polar residues) spans 964-974 (GYTSSRTSLEP). Positions 977 to 988 (SEEKDHRPHFSL) are enriched in basic and acidic residues. Over residues 1015-1028 (SVASSSTASSSSTV) the composition is skewed to low complexity. The SAM domain maps to 1078–1140 (WSVDDVIGWL…IESALRGLLQ (63 aa)).

Belongs to the SHANK family. Interacts (via PDZ domain) with egl-19 (via C-terminus). As to expression, expressed in the pharynx, pharyngeal-intestinal valve, intestine, rectal epithelial cells, tail neurons, nerve cord and sperm.

It is found in the cell projection. The protein localises to the pseudopodium. It localises to the cytoplasmic vesicle. The protein resides in the postsynaptic density. In terms of biological role, scaffold protein that most likely acts in the postsynaptic density (PSD) of excitatory synapses which orchestrates synapse formation and maintenance at neuromuscular junctions. Associates with and trafficks the L-type calcium channel egl-19 to the cell surface of body wall muscles to ensure the function of the calcium channel and therefore maintain the Ca(2+) current density. The maintenance of Ca(2+) also allows for the downstream regulation of Ca(2+)-induced expression of genes such as gem-4. Plays a role in the regulation of the defecation cycle, and this may be in association with the inositol trisphosphate (IP3) receptor itr-1, which in turn mediates periodic calcium release and muscle contractions. Required for normal fertility and pharyngeal pumping. The chain is Protein shank from Caenorhabditis elegans.